The primary structure comprises 511 residues: Intermediate cleaving peptidase 55 (511 aa).

Aspartate 327, aspartate 338, histidine 417, glutamate 444, and glutamate 467 together coordinate Mn(2+).

This sequence belongs to the peptidase M24B family. The cofactor is Mn(2+).

The protein resides in the nucleus. It is found in the mitochondrion inner membrane. It catalyses the reaction The enzyme cleaves the 36-Pro-Pro-37 bond of cysteine desulfurase (EC 2.8.1.7) removing three amino acid residues (Tyr-Ser-Pro) from the N-terminus after cleavage by mitochondrial processing peptidase.. Aminopeptidase which cleaves preprotein intermediates that carry destabilizing N-ter amino acid residues after the mitochondrial processing peptidase (MPP) cleavage site and is thus critical for stabilization of the mitochondrial proteome. In Saccharomyces cerevisiae (strain ATCC 204508 / S288c) (Baker's yeast), this protein is Intermediate cleaving peptidase 55 (ICP55).